We begin with the raw amino-acid sequence, 909 residues long: Protein translocase subunit SecA (909 aa).

ATP contacts are provided by residues Gln87, 105-109 (GEGKT), and Asp507. Positions 834–909 (EAVEEQRRRQ…KYKQCCGKLS (76 aa)) are disordered. Over residues 837–848 (EEQRRRQGDMQY) the composition is skewed to basic and acidic residues. Over residues 859–871 (QGAGGEGAAGGTA) the composition is skewed to gly residues. Residues Cys893, Cys895, Cys904, and Cys905 each contribute to the Zn(2+) site.

Belongs to the SecA family. Monomer and homodimer. Part of the essential Sec protein translocation apparatus which comprises SecA, SecYEG and auxiliary proteins SecDF-YajC and YidC. Zn(2+) serves as cofactor.

It localises to the cell inner membrane. The protein localises to the cytoplasm. The enzyme catalyses ATP + H2O + cellular proteinSide 1 = ADP + phosphate + cellular proteinSide 2.. In terms of biological role, part of the Sec protein translocase complex. Interacts with the SecYEG preprotein conducting channel. Has a central role in coupling the hydrolysis of ATP to the transfer of proteins into and across the cell membrane, serving both as a receptor for the preprotein-SecB complex and as an ATP-driven molecular motor driving the stepwise translocation of polypeptide chains across the membrane. This Alkalilimnicola ehrlichii (strain ATCC BAA-1101 / DSM 17681 / MLHE-1) protein is Protein translocase subunit SecA.